Consider the following 210-residue polypeptide: 2-hydroxy-3-keto-5-methylthiopentenyl-1-phosphate phosphatase (210 aa).

It belongs to the HAD-like hydrolase superfamily. MtnX family.

It carries out the reaction 2-hydroxy-5-methylsulfanyl-3-oxopent-1-enyl phosphate + H2O = 1,2-dihydroxy-5-(methylsulfanyl)pent-1-en-3-one + phosphate. It participates in amino-acid biosynthesis; L-methionine biosynthesis via salvage pathway; L-methionine from S-methyl-5-thio-alpha-D-ribose 1-phosphate: step 4/6. In terms of biological role, dephosphorylates 2-hydroxy-3-keto-5-methylthiopentenyl-1-phosphate (HK-MTPenyl-1-P) yielding 1,2-dihydroxy-3-keto-5-methylthiopentene (DHK-MTPene). This is 2-hydroxy-3-keto-5-methylthiopentenyl-1-phosphate phosphatase from Microcystis aeruginosa.